Reading from the N-terminus, the 477-residue chain is MFKNAFANLQKVGKSLMLPVSVLPIAGILLGVGSANFSWLPAVVSHVMAEAGGSVFANMPLIFAIGVALGFTNNDGVSALAAVVAYGIMVKTMAVVAPLVLHLPAEEIAAKHLADTGVLGGIISGAIAAYMFNRFYRIKLPEYLGFFAGKRFVPIISGLAAIFTGVVLSFVWPPIGTAIQAFSQWAAYQNPVVAFGIYGFIERCLVPFGLHHIWNVPFQMQIGEYTNAAGQVFHGDIPRYMAGDPTAGMLSGGFLFKMYGLPAAAIAIWHSAKPENRAKVGGIMISAALTSFLTGITEPIEFSFMFVAPILYIIHAILAGLAFPICILLGMRDGTSFSHGLIDFIVLSGNSSKLWLFPIVGAGYAIVYYTVFRVLIKALDLKTPGREDTTDDAKAGATSEMAPALVAAFGGKENITNLDACITRLRVSVADVAKVDQAGLKKLGAAGVVVAGSGVQAIFGTKSDNLKTEMDEYIRNS.

Topologically, residues 1 to 14 (MFKNAFANLQKVGK) are cytoplasmic. The region spanning 1 to 388 (MFKNAFANLQ…LDLKTPGRED (388 aa)) is the PTS EIIC type-1 domain. The chain crosses the membrane as a helical span at residues 15–35 (SLMLPVSVLPIAGILLGVGSA). The Periplasmic portion of the chain corresponds to 36–50 (NFSWLPAVVSHVMAE). Residues 51–71 (AGGSVFANMPLIFAIGVALGF) traverse the membrane as a helical segment. At 72 to 79 (TNNDGVSA) the chain is on the cytoplasmic side. Residues 80 to 100 (LAAVVAYGIMVKTMAVVAPLV) traverse the membrane as a helical segment. Residues 101-111 (LHLPAEEIAAK) are Periplasmic-facing. The helical transmembrane segment at 112-132 (HLADTGVLGGIISGAIAAYMF) threads the bilayer. At 133 to 151 (NRFYRIKLPEYLGFFAGKR) the chain is on the cytoplasmic side. A helical membrane pass occupies residues 152–172 (FVPIISGLAAIFTGVVLSFVW). Residues 173 to 190 (PPIGTAIQAFSQWAAYQN) lie on the Periplasmic side of the membrane. Residues 191–211 (PVVAFGIYGFIERCLVPFGLH) traverse the membrane as a helical segment. Over 212–248 (HIWNVPFQMQIGEYTNAAGQVFHGDIPRYMAGDPTAG) the chain is Cytoplasmic. Residues 249-269 (MLSGGFLFKMYGLPAAAIAIW) traverse the membrane as a helical segment. Over 270 to 279 (HSAKPENRAK) the chain is Periplasmic. A helical membrane pass occupies residues 280–300 (VGGIMISAALTSFLTGITEPI). Residues 301-309 (EFSFMFVAP) lie on the Cytoplasmic side of the membrane. Residues 310–330 (ILYIIHAILAGLAFPICILLG) traverse the membrane as a helical segment. The Periplasmic portion of the chain corresponds to 331-355 (MRDGTSFSHGLIDFIVLSGNSSKLW). A helical transmembrane segment spans residues 356-376 (LFPIVGAGYAIVYYTVFRVLI). The Cytoplasmic segment spans residues 377–477 (KALDLKTPGR…TEMDEYIRNS (101 aa)). The 79-residue stretch at 399-477 (SEMAPALVAA…TEMDEYIRNS (79 aa)) folds into the PTS EIIB type-1 domain. Cys421 serves as the catalytic Phosphocysteine intermediate; for EIIB activity. A Phosphocysteine modification is found at Cys421.

The protein resides in the cell inner membrane. The catalysed reaction is N(pros)-phospho-L-histidyl-[protein] + D-glucose(out) = D-glucose 6-phosphate(in) + L-histidyl-[protein]. Its function is as follows. The phosphoenolpyruvate-dependent sugar phosphotransferase system (sugar PTS), a major carbohydrate active transport system, catalyzes the phosphorylation of incoming sugar substrates concomitantly with their translocation across the cell membrane. The enzyme II complex composed of PtsG and Crr is involved in glucose transport. Also functions as a chemoreceptor monitoring the environment for changes in sugar concentration. It can also phosphorylate mannose, methyl alpha-glucoside and 2-deoxy-glucose. The sequence is that of PTS system glucose-specific EIICB component (ptsG) from Salmonella typhimurium (strain LT2 / SGSC1412 / ATCC 700720).